Consider the following 390-residue polypeptide: Putative glutamate--cysteine ligase 2 (390 aa).

This sequence belongs to the glutamate--cysteine ligase type 2 family. YbdK subfamily.

The catalysed reaction is L-cysteine + L-glutamate + ATP = gamma-L-glutamyl-L-cysteine + ADP + phosphate + H(+). Its function is as follows. ATP-dependent carboxylate-amine ligase which exhibits weak glutamate--cysteine ligase activity. The polypeptide is Putative glutamate--cysteine ligase 2 (Chloroflexus aurantiacus (strain ATCC 29366 / DSM 635 / J-10-fl)).